Here is a 444-residue protein sequence, read N- to C-terminus: 1,4-beta-D-glucan glucohydrolase (444 aa).

Catalysis depends on Glu-164, which acts as the Proton donor. Catalysis depends on Glu-349, which acts as the Nucleophile.

It belongs to the glycosyl hydrolase 1 family. Monomer.

It catalyses the reaction Hydrolysis of (1-&gt;4)-linkages in (1-&gt;4)-beta-D-glucans, to remove successive glucose units.. The enzyme catalyses Hydrolysis of terminal, non-reducing beta-D-glucosyl residues with release of beta-D-glucose.. The protein operates within glycan metabolism; cellulose degradation. It functions in the pathway glycan metabolism; beta-D-glucan degradation. Activated by glucose up to 200 mM when p-nitrophenyl-beta-glucoside is used as the substrate. This activation by end product concentrations may be due to a transglycosylation activity of the enzyme. Its function is as follows. Broad substrate specificity glycosidase. Releases glucose from soluble glucooligomers, with a preference for longer oligomers; acts more readily on cellotetraose than on cellobiose. Displays similar activities towards the disaccharides lactose and cellobiose. Is also able to hydrolyze various aryl-beta-glycosides in vitro. This is 1,4-beta-D-glucan glucohydrolase from Thermotoga neapolitana (strain ATCC 49049 / DSM 4359 / NBRC 107923 / NS-E).